Reading from the N-terminus, the 376-residue chain is Protein-glutamate methylesterase/protein-glutamine glutaminase 1 (376 aa).

One can recognise a Response regulatory domain in the interval Lys4 to Leu121. Asp55 is modified (4-aspartylphosphate). A disordered region spans residues Arg138 to Ala174. The span at Ala141–Thr158 shows a compositional bias: polar residues. Residues Ser183–Ala376 enclose the CheB-type methylesterase domain. Residues Ser195, His222, and Asp318 contribute to the active site.

This sequence belongs to the CheB family. In terms of processing, phosphorylated by CheA. Phosphorylation of the N-terminal regulatory domain activates the methylesterase activity.

The protein resides in the cytoplasm. It catalyses the reaction [protein]-L-glutamate 5-O-methyl ester + H2O = L-glutamyl-[protein] + methanol + H(+). It carries out the reaction L-glutaminyl-[protein] + H2O = L-glutamyl-[protein] + NH4(+). Involved in chemotaxis. Part of a chemotaxis signal transduction system that modulates chemotaxis in response to various stimuli. Catalyzes the demethylation of specific methylglutamate residues introduced into the chemoreceptors (methyl-accepting chemotaxis proteins or MCP) by CheR. Also mediates the irreversible deamidation of specific glutamine residues to glutamic acid. The polypeptide is Protein-glutamate methylesterase/protein-glutamine glutaminase 1 (Vibrio vulnificus (strain CMCP6)).